The sequence spans 467 residues: Histone acetyltransferase type B catalytic subunit (467 aa).

Residues 1–24 (MVQKQQASAGPGTEPKKRRRVGFS) form a disordered region. Acetyl-CoA contacts are provided by residues 249–251 (ILV) and 256–262 (QGKGLGS). The active-site Proton donor/acceptor is the Glu-283.

Belongs to the HAT1 family.

The protein resides in the nucleus. It is found in the cytoplasm. It carries out the reaction L-lysyl-[protein] + acetyl-CoA = N(6)-acetyl-L-lysyl-[protein] + CoA + H(+). Its function is as follows. Acetylates soluble but not nucleosomal H4. Acetylates 'Lys-12' of histone H4. The polypeptide is Histone acetyltransferase type B catalytic subunit (HAG2) (Arabidopsis thaliana (Mouse-ear cress)).